Consider the following 425-residue polypeptide: GTPase Obg (425 aa).

Residues 1–158 (MFVDVARIYV…RWLLLELKVV (158 aa)) enclose the Obg domain. The OBG-type G domain occupies 159-330 (ADVGLVGFPN…LLEAAYDLIR (172 aa)). GTP contacts are provided by residues 165–172 (GFPNAGKS), 190–194 (FTTLT), 212–215 (DIPG), 282–285 (NKMD), and 311–313 (SGA). Mg(2+) contacts are provided by Ser-172 and Thr-192. Positions 345–422 (VYRPKEEGWR…VCDIEFELMA (78 aa)) constitute an OCT domain.

Belongs to the TRAFAC class OBG-HflX-like GTPase superfamily. OBG GTPase family. In terms of assembly, monomer. Mg(2+) serves as cofactor.

Its subcellular location is the cytoplasm. Functionally, an essential GTPase which binds GTP, GDP and possibly (p)ppGpp with moderate affinity, with high nucleotide exchange rates and a fairly low GTP hydrolysis rate. Plays a role in control of the cell cycle, stress response, ribosome biogenesis and in those bacteria that undergo differentiation, in morphogenesis control. In Symbiobacterium thermophilum (strain DSM 24528 / JCM 14929 / IAM 14863 / T), this protein is GTPase Obg.